The following is a 288-amino-acid chain: Alpha/beta hydrolase domain-containing protein 17B (288 aa).

Active-site charge relay system residues include serine 170, aspartate 235, and histidine 264.

This sequence belongs to the AB hydrolase superfamily. ABHD17 family. In terms of processing, palmitoylated on cysteine residues located in a cysteine cluster at the N-terminus which promotes membrane localization.

The protein localises to the cell membrane. The protein resides in the recycling endosome membrane. It is found in the cell projection. It localises to the dendritic spine. Its subcellular location is the postsynaptic density membrane. The catalysed reaction is S-hexadecanoyl-L-cysteinyl-[protein] + H2O = L-cysteinyl-[protein] + hexadecanoate + H(+). In terms of biological role, hydrolyzes fatty acids from S-acylated cysteine residues in proteins. Has depalmitoylating activity towards NRAS. In Gallus gallus (Chicken), this protein is Alpha/beta hydrolase domain-containing protein 17B.